Here is a 294-residue protein sequence, read N- to C-terminus: MASFRRFRLLSPLKPCVTFGRMLYTRIDKDGLTMLAGHLAYVSLLSLVPLITVIFALFAAFPMFAEISIKLKAFIFANFMPATGDIIQNYLEQFVANSNRMTVVGTCGLIVTALLLIYSVDSVLNIIWRSKIQRSLVFSFAVYWMVLTLGPILVGASMVISSYLLSLHWLAHARVDSMIDEILRVFPLLISWVSFWLLYSVVPTVRVPARDALIGALVAALLFELGKKGFAMYITLFPSYQLIYGVLAVIPILFLWVYWSWCIVLLGAEITVTLGEYRAERHHAKNVITQSPEM.

Transmembrane regions (helical) follow at residues 44-64, 67-87, 108-128, 136-156, 185-205, 212-232, and 246-266; these read LLSLVPLITVIFALFAAFPMF, ISIKLKAFIFANFMPATGDII, GLIVTALLLIYSVDSVLNIIW, LVFSFAVYWMVLTLGPILVGA, VFPLLISWVSFWLLYSVVPTV, ALIGALVAALLFELGKKGFAM, and VLAVIPILFLWVYWSWCIVLL.

It belongs to the UPF0761 family.

The protein resides in the cell inner membrane. This Yersinia pseudotuberculosis serotype O:3 (strain YPIII) protein is UPF0761 membrane protein YPK_4186.